A 406-amino-acid chain; its full sequence is Argininosuccinate synthase (406 aa).

ATP-binding positions include 11–19 and Ala38; that span reads AYSGGLDTS. Tyr91 and Ser96 together coordinate L-citrulline. Gly121 contributes to the ATP binding site. L-aspartate is bound by residues Thr123, Asn127, and Asp128. Asn127 serves as a coordination point for L-citrulline. Residues Arg131, Ser182, Ser191, Glu267, and Tyr279 each coordinate L-citrulline.

It belongs to the argininosuccinate synthase family. Type 1 subfamily. As to quaternary structure, homotetramer.

The protein resides in the cytoplasm. It carries out the reaction L-citrulline + L-aspartate + ATP = 2-(N(omega)-L-arginino)succinate + AMP + diphosphate + H(+). It participates in amino-acid biosynthesis; L-arginine biosynthesis; L-arginine from L-ornithine and carbamoyl phosphate: step 2/3. This Rhodospirillum centenum (strain ATCC 51521 / SW) protein is Argininosuccinate synthase.